A 325-amino-acid chain; its full sequence is Aldo-keto reductase family 1 member A1 (325 aa).

T2 carries the N-acetylthreonine modification. The residue at position 4 (S4) is a Phosphoserine. NADP(+)-binding positions include 11-20 (GQKMPLIGLG), T21, and W22. A Phosphoserine modification is found at S38. Residue D45 coordinates NADP(+). Residue Y50 is the Proton donor of the active site. N6-acetyllysine; alternate is present on K127. Residue K127 is modified to N6-succinyllysine; alternate. K145 is subject to N6-succinyllysine. Residues S162, N163, S211, L213, S215, S216, K263, S264, I265, R269, Q272, and N273 each coordinate NADP(+). S211 is subject to Phosphoserine.

The protein belongs to the aldo/keto reductase family. As to quaternary structure, monomer. Widely expressed.

The protein localises to the cytoplasm. It localises to the cytosol. The protein resides in the apical cell membrane. It catalyses the reaction a primary alcohol + NADP(+) = an aldehyde + NADPH + H(+). It carries out the reaction L-gulonate + NADP(+) = aldehydo-D-glucuronate + NADPH + H(+). The catalysed reaction is L-gulono-1,4-lactone + NADP(+) = D-glucurono-3,6-lactone + NADPH + H(+). The enzyme catalyses allyl alcohol + NADP(+) = acrolein + NADPH + H(+). It catalyses the reaction glycerol + NADP(+) = D-glyceraldehyde + NADPH + H(+). It carries out the reaction glycerol + NADP(+) = L-glyceraldehyde + NADPH + H(+). The catalysed reaction is hydroxyacetone + NADP(+) = methylglyoxal + NADPH + H(+). The enzyme catalyses 3-deoxyfructose + NADP(+) = 3-deoxyglucosone + NADPH + H(+). It catalyses the reaction (R)-mevalonate + NADP(+) = (R)-mevaldate + NADPH + H(+). It carries out the reaction pyridine 3-methanol + NADP(+) = pyridine-3-carbaldehyde + NADPH + H(+). The catalysed reaction is S-nitroso-CoA + NADPH + H(+) = sulfinamide-CoA + NADP(+). The enzyme catalyses S-nitrosoglutathione + NADPH + H(+) = S-(hydroxysulfenamide)glutathione + NADP(+). Catalyzes the NADPH-dependent reduction of a wide variety of carbonyl-containing compounds to their corresponding alcohols. Displays enzymatic activity towards endogenous metabolites such as aromatic and aliphatic aldehydes, ketones, monosaccharides and bile acids, with a preference for negatively charged substrates, such as glucuronate and succinic semialdehyde. Plays an important role in ascorbic acid biosynthesis by catalyzing the reduction of D-glucuronic acid and D-glucurono-gamma-lactone. Functions as a detoxifiying enzyme by reducing a range of toxic aldehydes. Reduces methylglyoxal and 3-deoxyglucosone, which are present at elevated levels under hyperglycemic conditions and are cytotoxic. Involved in the detoxification of lipid-derived aldehydes like acrolein. Plays a role in the activation of procarcinogens, such as polycyclic aromatic hydrocarbon trans-dihydrodiols, and in the metabolism of various xenobiotics and drugs. Also acts as an inhibitor of protein S-nitrosylation by mediating degradation of S-nitroso-coenzyme A (S-nitroso-CoA), a cofactor required to S-nitrosylate proteins. S-nitroso-CoA reductase activity is involved in reprogramming intermediary metabolism in renal proximal tubules, notably by inhibiting protein S-nitrosylation of isoform 2 of PKM (PKM2). Also acts as a S-nitroso-glutathione reductase by catalyzing the NADPH-dependent reduction of S-nitrosoglutathione. Displays no reductase activity towards retinoids. In Mus musculus (Mouse), this protein is Aldo-keto reductase family 1 member A1.